We begin with the raw amino-acid sequence, 365 residues long: tRNA-specific 2-thiouridylase MnmA (365 aa).

ATP-binding positions include 14 to 21 and L40; that span reads AMSGGVDS. C108 serves as the catalytic Nucleophile. The cysteines at positions 108 and 204 are disulfide-linked. Position 132 (G132) interacts with ATP. The interaction with tRNA stretch occupies residues 154–156; the sequence is KDQ. Catalysis depends on C204, which acts as the Cysteine persulfide intermediate.

It belongs to the MnmA/TRMU family.

Its subcellular location is the cytoplasm. The enzyme catalyses S-sulfanyl-L-cysteinyl-[protein] + uridine(34) in tRNA + AH2 + ATP = 2-thiouridine(34) in tRNA + L-cysteinyl-[protein] + A + AMP + diphosphate + H(+). In terms of biological role, catalyzes the 2-thiolation of uridine at the wobble position (U34) of tRNA, leading to the formation of s(2)U34. The sequence is that of tRNA-specific 2-thiouridylase MnmA from Rickettsia africae (strain ESF-5).